Reading from the N-terminus, the 255-residue chain is Taurine import ATP-binding protein TauB (255 aa).

The ABC transporter domain maps to 2-229 (LQISHLYADY…RFVAGESSRS (228 aa)). 34–41 (GPSGCGKT) contacts ATP.

This sequence belongs to the ABC transporter superfamily. Taurine importer (TC 3.A.1.17.1) family. The complex is composed of two ATP-binding proteins (TauB), two transmembrane proteins (TauC) and a solute-binding protein (TauA).

Its subcellular location is the cell inner membrane. It catalyses the reaction taurine(out) + ATP + H2O = taurine(in) + ADP + phosphate + H(+). In terms of biological role, part of the ABC transporter complex TauABC involved in taurine import. Responsible for energy coupling to the transport system. The protein is Taurine import ATP-binding protein TauB of Shigella flexneri.